We begin with the raw amino-acid sequence, 233 residues long: Endonuclease V (233 aa).

Mg(2+) is bound by residues aspartate 48 and aspartate 116.

It belongs to the endonuclease V family. Mg(2+) serves as cofactor.

The protein localises to the cytoplasm. The enzyme catalyses Endonucleolytic cleavage at apurinic or apyrimidinic sites to products with a 5'-phosphate.. Its function is as follows. DNA repair enzyme involved in the repair of deaminated bases. Selectively cleaves double-stranded DNA at the second phosphodiester bond 3' to a deoxyinosine leaving behind the intact lesion on the nicked DNA. The protein is Endonuclease V of Streptomyces coelicolor (strain ATCC BAA-471 / A3(2) / M145).